The sequence spans 82 residues: Small ribosomal subunit protein uS17 (82 aa).

It belongs to the universal ribosomal protein uS17 family. Part of the 30S ribosomal subunit.

In terms of biological role, one of the primary rRNA binding proteins, it binds specifically to the 5'-end of 16S ribosomal RNA. The chain is Small ribosomal subunit protein uS17 from Rhodopseudomonas palustris (strain HaA2).